The primary structure comprises 383 residues: Probable protein phosphatase 2C 13 (383 aa).

Positions 78–349 (RSGSFADIRS…DNMTVIVICF (272 aa)) constitute a PPM-type phosphatase domain. Mn(2+) contacts are provided by D121, G122, D297, and D340.

Belongs to the PP2C family. Mg(2+) is required as a cofactor. Requires Mn(2+) as cofactor.

The enzyme catalyses O-phospho-L-seryl-[protein] + H2O = L-seryl-[protein] + phosphate. It catalyses the reaction O-phospho-L-threonyl-[protein] + H2O = L-threonyl-[protein] + phosphate. This is Probable protein phosphatase 2C 13 from Arabidopsis thaliana (Mouse-ear cress).